The sequence spans 230 residues: V-type proton ATPase subunit E (230 aa).

It belongs to the V-ATPase E subunit family. In terms of assembly, V-ATPase is a heteromultimeric enzyme composed of a peripheral catalytic V1 complex (components A to H) attached to an integral membrane V0 proton pore complex (components: a, c, c', c'' and d).

Its function is as follows. Subunit of the peripheral V1 complex of vacuolar ATPase essential for assembly or catalytic function. V-ATPase is responsible for acidifying a variety of intracellular compartments in eukaryotic cells. This chain is V-type proton ATPase subunit E (VATE), found in Citrus limon (Lemon).